The sequence spans 139 residues: Small ribosomal subunit protein uS19 (139 aa).

It belongs to the universal ribosomal protein uS19 family.

Its function is as follows. Protein S19 forms a complex with S13 that binds strongly to the 16S ribosomal RNA. This chain is Small ribosomal subunit protein uS19, found in Ignicoccus hospitalis (strain KIN4/I / DSM 18386 / JCM 14125).